Consider the following 173-residue polypeptide: uncharacterized protein (173 aa).

A propeptide spans 1–15 (MERKLSQRAGNTFKG) (leader sequence). N-methylphenylalanine is present on Phe-16. A helical membrane pass occupies residues 16 to 37 (FTLVEVLITLAIISLVFSLILI).

It is found in the membrane. This is an uncharacterized protein from Aquifex aeolicus (strain VF5).